We begin with the raw amino-acid sequence, 384 residues long: Substance-K receptor (384 aa).

Residues methionine 1–glutamine 32 are Extracellular-facing. Residues asparagine 11 and asparagine 19 are each glycosylated (N-linked (GlcNAc...) asparagine). The helical transmembrane segment at leucine 33–tryptophan 56 threads the bilayer. The Cytoplasmic portion of the chain corresponds to isoleucine 57 to asparagine 69. The chain crosses the membrane as a helical span at residues tyrosine 70–asparagine 90. The Extracellular segment spans residues phenylalanine 91–tyrosine 107. Cysteine 106 and cysteine 181 form a disulfide bridge. Residues phenylalanine 108 to alanine 129 form a helical membrane-spanning segment. Topologically, residues aspartate 130 to arginine 149 are cytoplasmic. A helical transmembrane segment spans residues alanine 150–serine 170. Over threonine 171–leucine 196 the chain is Extracellular. A helical membrane pass occupies residues tyrosine 197–serine 218. Over valine 219 to threonine 251 the chain is Cytoplasmic. Residues methionine 252–leucine 272 form a helical membrane-spanning segment. Topologically, residues glycine 273–leucine 290 are extracellular. A helical membrane pass occupies residues alanine 291–leucine 310. At asparagine 311–proline 384 the chain is on the cytoplasmic side. Residue cysteine 324 is the site of S-palmitoyl cysteine attachment.

It belongs to the G-protein coupled receptor 1 family.

The protein localises to the cell membrane. This is a receptor for the tachykinin neuropeptide substance K (neurokinin A). It is associated with G proteins that activate a phosphatidylinositol-calcium second messenger system. The rank order of affinity of this receptor to tachykinins is: substance K &gt; neuromedin-K &gt; substance P. In Bos taurus (Bovine), this protein is Substance-K receptor (TACR2).